We begin with the raw amino-acid sequence, 201 residues long: 3-isopropylmalate dehydratase small subunit (201 aa).

This sequence belongs to the LeuD family. LeuD type 1 subfamily. As to quaternary structure, heterodimer of LeuC and LeuD.

The catalysed reaction is (2R,3S)-3-isopropylmalate = (2S)-2-isopropylmalate. It functions in the pathway amino-acid biosynthesis; L-leucine biosynthesis; L-leucine from 3-methyl-2-oxobutanoate: step 2/4. Catalyzes the isomerization between 2-isopropylmalate and 3-isopropylmalate, via the formation of 2-isopropylmaleate. This is 3-isopropylmalate dehydratase small subunit from Shewanella baltica (strain OS223).